The chain runs to 183 residues: Ribosome-recycling factor (183 aa).

It belongs to the RRF family.

It localises to the cytoplasm. In terms of biological role, responsible for the release of ribosomes from messenger RNA at the termination of protein biosynthesis. May increase the efficiency of translation by recycling ribosomes from one round of translation to another. The protein is Ribosome-recycling factor of Bifidobacterium longum (strain DJO10A).